Here is a 411-residue protein sequence, read N- to C-terminus: Tyrosine--tRNA ligase (411 aa).

Positions proline 50–histidine 59 match the 'HIGH' region motif. A 'KMSKS' region motif is present at residues lysine 236–serine 240. Position 239 (lysine 239) interacts with ATP. An S4 RNA-binding domain is found at valine 345 to leucine 409.

It belongs to the class-I aminoacyl-tRNA synthetase family. TyrS type 2 subfamily. As to quaternary structure, homodimer.

Its subcellular location is the cytoplasm. It catalyses the reaction tRNA(Tyr) + L-tyrosine + ATP = L-tyrosyl-tRNA(Tyr) + AMP + diphosphate + H(+). Functionally, catalyzes the attachment of tyrosine to tRNA(Tyr) in a two-step reaction: tyrosine is first activated by ATP to form Tyr-AMP and then transferred to the acceptor end of tRNA(Tyr). This chain is Tyrosine--tRNA ligase, found in Deinococcus radiodurans (strain ATCC 13939 / DSM 20539 / JCM 16871 / CCUG 27074 / LMG 4051 / NBRC 15346 / NCIMB 9279 / VKM B-1422 / R1).